The sequence spans 306 residues: Pantothenate kinase (306 aa).

An ATP-binding site is contributed by 90–97 (GSVAVGKS).

Belongs to the prokaryotic pantothenate kinase family.

Its subcellular location is the cytoplasm. The enzyme catalyses (R)-pantothenate + ATP = (R)-4'-phosphopantothenate + ADP + H(+). It participates in cofactor biosynthesis; coenzyme A biosynthesis; CoA from (R)-pantothenate: step 1/5. This Listeria monocytogenes serotype 4a (strain HCC23) protein is Pantothenate kinase.